A 272-amino-acid polypeptide reads, in one-letter code: Orotidine 5'-phosphate decarboxylase (272 aa).

The Proton donor role is filled by Lys93.

This sequence belongs to the OMP decarboxylase family. Type 2 subfamily.

The enzyme catalyses orotidine 5'-phosphate + H(+) = UMP + CO2. It functions in the pathway pyrimidine metabolism; UMP biosynthesis via de novo pathway; UMP from orotate: step 2/2. The chain is Orotidine 5'-phosphate decarboxylase from Roseiflexus sp. (strain RS-1).